The primary structure comprises 284 residues: ASC1-like protein 3 (284 aa).

Helical transmembrane passes span serine 9–leucine 29, leucine 69–serine 89, leucine 108–alanine 128, isoleucine 148–leucine 168, phenylalanine 195–isoleucine 215, and methionine 243–methionine 263. Residues valine 60 to asparagine 267 enclose the TLC domain.

The protein resides in the endoplasmic reticulum membrane. Mediates resistance to sphinganine-analog mycotoxins (SAMs) by restoring the sphingolipid biosynthesis. Could salvage the transport of GPI-anchored proteins from the endoplasmic reticulum to the Golgi apparatus in ceramides-depleted cells after SAM exposure. This Oryza sativa subsp. japonica (Rice) protein is ASC1-like protein 3.